A 305-amino-acid chain; its full sequence is Probable branched-chain-amino-acid aminotransferase (305 aa).

K156 carries the N6-(pyridoxal phosphate)lysine modification.

The protein belongs to the class-IV pyridoxal-phosphate-dependent aminotransferase family. It depends on pyridoxal 5'-phosphate as a cofactor.

The catalysed reaction is L-leucine + 2-oxoglutarate = 4-methyl-2-oxopentanoate + L-glutamate. The enzyme catalyses L-isoleucine + 2-oxoglutarate = (S)-3-methyl-2-oxopentanoate + L-glutamate. It carries out the reaction L-valine + 2-oxoglutarate = 3-methyl-2-oxobutanoate + L-glutamate. It participates in amino-acid biosynthesis; L-isoleucine biosynthesis; L-isoleucine from 2-oxobutanoate: step 4/4. Its pathway is amino-acid biosynthesis; L-leucine biosynthesis; L-leucine from 3-methyl-2-oxobutanoate: step 4/4. It functions in the pathway amino-acid biosynthesis; L-valine biosynthesis; L-valine from pyruvate: step 4/4. Acts on leucine, isoleucine and valine. The protein is Probable branched-chain-amino-acid aminotransferase (ilvE) of Synechocystis sp. (strain ATCC 27184 / PCC 6803 / Kazusa).